A 433-amino-acid polypeptide reads, in one-letter code: GTPase Obg (433 aa).

In terms of domain architecture, Obg spans 1-158 (MFVDQVKIYV…RNVILELKLL (158 aa)). In terms of domain architecture, OBG-type G spans 159 to 329 (ADVGLVGFPS…LLFAIADLLE (171 aa)). GTP is bound by residues 165–172 (GFPSVGKS), 190–194 (FTTLV), 212–215 (DLPG), 282–285 (NKMD), and 310–312 (SAA). Residues serine 172 and threonine 192 each coordinate Mg(2+). An OCT domain is found at 350–428 (KYEKEELPFT…LLDYEFEFVD (79 aa)).

The protein belongs to the TRAFAC class OBG-HflX-like GTPase superfamily. OBG GTPase family. As to quaternary structure, monomer. Requires Mg(2+) as cofactor.

The protein resides in the cytoplasm. Functionally, an essential GTPase which binds GTP, GDP and possibly (p)ppGpp with moderate affinity, with high nucleotide exchange rates and a fairly low GTP hydrolysis rate. Plays a role in control of the cell cycle, stress response, ribosome biogenesis and in those bacteria that undergo differentiation, in morphogenesis control. The sequence is that of GTPase Obg from Geobacillus thermodenitrificans (strain NG80-2).